We begin with the raw amino-acid sequence, 96 residues long: Co-chaperonin GroES 2 (96 aa).

This sequence belongs to the GroES chaperonin family. As to quaternary structure, heptamer of 7 subunits arranged in a ring. Interacts with the chaperonin GroEL.

It localises to the cytoplasm. Functionally, together with the chaperonin GroEL, plays an essential role in assisting protein folding. The GroEL-GroES system forms a nano-cage that allows encapsulation of the non-native substrate proteins and provides a physical environment optimized to promote and accelerate protein folding. GroES binds to the apical surface of the GroEL ring, thereby capping the opening of the GroEL channel. The sequence is that of Co-chaperonin GroES 2 from Vibrio vulnificus (strain CMCP6).